The sequence spans 431 residues: Adenylosuccinate synthetase (431 aa).

GTP-binding positions include 13-19 (GDEGKGK) and 41-43 (GHT). The active-site Proton acceptor is D14. 2 residues coordinate Mg(2+): D14 and G41. Residues 14-17 (DEGK), 39-42 (NAGH), T130, R144, Q225, T240, and R306 contribute to the IMP site. H42 acts as the Proton donor in catalysis. 302–308 (ATTGRQR) is a substrate binding site. GTP is bound by residues R308, 334–336 (KLD), and 416–418 (STG).

Belongs to the adenylosuccinate synthetase family. Homodimer. The cofactor is Mg(2+).

Its subcellular location is the cytoplasm. It catalyses the reaction IMP + L-aspartate + GTP = N(6)-(1,2-dicarboxyethyl)-AMP + GDP + phosphate + 2 H(+). The protein operates within purine metabolism; AMP biosynthesis via de novo pathway; AMP from IMP: step 1/2. Functionally, plays an important role in the de novo pathway of purine nucleotide biosynthesis. Catalyzes the first committed step in the biosynthesis of AMP from IMP. The polypeptide is Adenylosuccinate synthetase (Halorhodospira halophila (strain DSM 244 / SL1) (Ectothiorhodospira halophila (strain DSM 244 / SL1))).